A 106-amino-acid polypeptide reads, in one-letter code: ATP-dependent Clp protease adapter protein ClpS (106 aa).

This sequence belongs to the ClpS family. Binds to the N-terminal domain of the chaperone ClpA.

Functionally, involved in the modulation of the specificity of the ClpAP-mediated ATP-dependent protein degradation. This Vibrio cholerae serotype O1 (strain ATCC 39541 / Classical Ogawa 395 / O395) protein is ATP-dependent Clp protease adapter protein ClpS.